The primary structure comprises 78 residues: Small nuclear ribonucleoprotein F (78 aa).

One can recognise a Sm domain in the interval asparagine 7–valine 78.

Belongs to the snRNP Sm proteins family. SmF/LSm6 subfamily. Belongs to the 40S cdc5-associated complex (or cwf complex), a spliceosome sub-complex reminiscent of a late-stage spliceosome composed of the U2, U5 and U6 snRNAs and at least brr2, cdc5, cwf2/prp3, cwf3/syf1, cwf4/syf3, cwf5/ecm2, spp42/cwf6, cwf7/spf27, cwf8, cwf9, cwf10, cwf11, cwf12, prp45/cwf13, cwf14, cwf15, cwf16, cwf17, cwf18, cwf19, cwf20, cwf21, cwf22, cwf23, cwf24, cwf25, cwf26, cyp7/cwf27, cwf28, cwf29/ist3, lea1, msl1, prp5/cwf1, prp10, prp12/sap130, prp17, prp22, sap61, sap62, sap114, sap145, slu7, smb1, smd1, smd3, smf1, smg1 and syf2.

Its subcellular location is the nucleus. The protein localises to the cytoplasm. Its function is as follows. Plays a role in pre-mRNA splicing as a core component of the spliceosomal U1, U2, U4 and U5 small nuclear ribonucleoproteins (snRNPs), the building blocks of the spliceosome. The protein is Small nuclear ribonucleoprotein F (smf1) of Schizosaccharomyces pombe (strain 972 / ATCC 24843) (Fission yeast).